The chain runs to 453 residues: Bifunctional protein GlmU (453 aa).

A pyrophosphorylase region spans residues 1–225; that stretch reads MNIVILAAGT…EWETLGVNSK (225 aa). Residues 6 to 9, Lys20, Gln71, 76 to 77, 98 to 100, Gly135, Glu150, Asn165, and Asn223 each bind UDP-N-acetyl-alpha-D-glucosamine; these read LAAG, GT, and YGD. Position 100 (Asp100) interacts with Mg(2+). Asn223 lines the Mg(2+) pocket. Positions 226–246 are linker; it reads AQLAELERIHQRNVADALLAD. The N-acetyltransferase stretch occupies residues 247–453; the sequence is GVTLADPARI…GYVRPVKKKS (207 aa). Residues Arg329 and Lys347 each coordinate UDP-N-acetyl-alpha-D-glucosamine. His359 serves as the catalytic Proton acceptor. Residues Tyr362 and Asn373 each coordinate UDP-N-acetyl-alpha-D-glucosamine. Acetyl-CoA-binding positions include Ala376, 382 to 383, Ser401, and Ala419; that span reads NY.

This sequence in the N-terminal section; belongs to the N-acetylglucosamine-1-phosphate uridyltransferase family. In the C-terminal section; belongs to the transferase hexapeptide repeat family. As to quaternary structure, homotrimer. Mg(2+) serves as cofactor.

Its subcellular location is the cytoplasm. It carries out the reaction alpha-D-glucosamine 1-phosphate + acetyl-CoA = N-acetyl-alpha-D-glucosamine 1-phosphate + CoA + H(+). It catalyses the reaction N-acetyl-alpha-D-glucosamine 1-phosphate + UTP + H(+) = UDP-N-acetyl-alpha-D-glucosamine + diphosphate. Its pathway is nucleotide-sugar biosynthesis; UDP-N-acetyl-alpha-D-glucosamine biosynthesis; N-acetyl-alpha-D-glucosamine 1-phosphate from alpha-D-glucosamine 6-phosphate (route II): step 2/2. It participates in nucleotide-sugar biosynthesis; UDP-N-acetyl-alpha-D-glucosamine biosynthesis; UDP-N-acetyl-alpha-D-glucosamine from N-acetyl-alpha-D-glucosamine 1-phosphate: step 1/1. The protein operates within bacterial outer membrane biogenesis; LPS lipid A biosynthesis. Functionally, catalyzes the last two sequential reactions in the de novo biosynthetic pathway for UDP-N-acetylglucosamine (UDP-GlcNAc). The C-terminal domain catalyzes the transfer of acetyl group from acetyl coenzyme A to glucosamine-1-phosphate (GlcN-1-P) to produce N-acetylglucosamine-1-phosphate (GlcNAc-1-P), which is converted into UDP-GlcNAc by the transfer of uridine 5-monophosphate (from uridine 5-triphosphate), a reaction catalyzed by the N-terminal domain. The protein is Bifunctional protein GlmU of Burkholderia multivorans (strain ATCC 17616 / 249).